The sequence spans 1009 residues: Helicase-like transcription factor (1009 aa).

Omega-N-methylarginine is present on Arg27. A DNA-binding region spans residues 38 to 287 (EFQDVIPPDD…FSEKDRPENV (250 aa)). Lys112 participates in a covalent cross-link: Glycyl lysine isopeptide (Lys-Gly) (interchain with G-Cter in SUMO2). Tyr195 carries the post-translational modification Phosphotyrosine; by JAK2. Lys211 is covalently cross-linked (Glycyl lysine isopeptide (Lys-Gly) (interchain with G-Cter in SUMO2)). 294–301 (DDMGLGKT) serves as a coordination point for ATP. Positions 336–365 (DDSMKLGGNNTSEKADGLSKDASRCSEQPS) are disordered. Residues 348 to 359 (EKADGLSKDASR) are compositionally biased toward basic and acidic residues. Phosphoserine occurs at positions 397, 398, and 400. Positions 435 to 606 (IEDVAFACAL…WSLLSFLKLK (172 aa)) constitute a Helicase ATP-binding domain. The short motif at 557 to 560 (DEGH) is the DEGH box element. Residue Thr736 is modified to Phosphothreonine. The RING-type zinc-finger motif lies at 760–801 (CAICLDSLTVPVITHCAHVFCKPCICQVIQNEQPHAKCPLCR). Positions 837 to 996 (ALMHALTDLR…TKKPNADEMK (160 aa)) constitute a Helicase C-terminal domain. The tract at residues 925 to 1009 (SRVFLMDPAW…INEIRTLIDL (85 aa)) is interaction with SP1 and SP3.

The protein belongs to the SNF2/RAD54 helicase family. RAD16 subfamily. In terms of assembly, interacts with SP1 and SP3 independently of DNA; the interaction with these transcriptional factors may be required for basal transcription of target genes. Interacts with EGR1; the interaction requires prior binding to DNA and represses c-Rel via a DNA looping mechanism. Interacts with GATA4. Interacts with PCNA; the interaction promotes polyubiquitination of PCNA through association with the UBE2B-RAD18 and UBE2V2-UBE2N ubiquitin ligase complexes. Interacts with RAD18, SHPRH, UBE2V2 and UBE2N. As to expression, expressed in brain, heart, kidney, liver, lung, pancreas, placenta and skeletal muscle.

The protein localises to the cytoplasm. It localises to the nucleus. Its subcellular location is the nucleolus. It is found in the nucleoplasm. It carries out the reaction S-ubiquitinyl-[E2 ubiquitin-conjugating enzyme]-L-cysteine + [acceptor protein]-L-lysine = [E2 ubiquitin-conjugating enzyme]-L-cysteine + N(6)-ubiquitinyl-[acceptor protein]-L-lysine.. Its pathway is protein modification; protein ubiquitination. Has both helicase and E3 ubiquitin ligase activities. Possesses intrinsic ATP-dependent nucleosome-remodeling activity; This activity may be required for transcriptional activation or repression of specific target promoters. These may include the SERPINE1 and HIV-1 promoters and the SV40 enhancer, to which this protein can bind directly. Plays a role in error-free postreplication repair (PRR) of damaged DNA and maintains genomic stability through acting as a ubiquitin ligase for 'Lys-63'-linked polyubiquitination of chromatin-bound PCNA. This is Helicase-like transcription factor (HLTF) from Homo sapiens (Human).